A 120-amino-acid polypeptide reads, in one-letter code: NAD(P)H-quinone oxidoreductase subunit 3, chloroplastic (120 aa).

3 consecutive transmembrane segments (helical) span residues I9–G29, M64–M84, and V88–S108.

This sequence belongs to the complex I subunit 3 family. As to quaternary structure, NDH is composed of at least 16 different subunits, 5 of which are encoded in the nucleus.

It localises to the plastid. Its subcellular location is the chloroplast thylakoid membrane. The enzyme catalyses a plastoquinone + NADH + (n+1) H(+)(in) = a plastoquinol + NAD(+) + n H(+)(out). It catalyses the reaction a plastoquinone + NADPH + (n+1) H(+)(in) = a plastoquinol + NADP(+) + n H(+)(out). Functionally, NDH shuttles electrons from NAD(P)H:plastoquinone, via FMN and iron-sulfur (Fe-S) centers, to quinones in the photosynthetic chain and possibly in a chloroplast respiratory chain. The immediate electron acceptor for the enzyme in this species is believed to be plastoquinone. Couples the redox reaction to proton translocation, and thus conserves the redox energy in a proton gradient. The sequence is that of NAD(P)H-quinone oxidoreductase subunit 3, chloroplastic from Gossypium barbadense (Sea Island cotton).